A 198-amino-acid chain; its full sequence is Large ribosomal subunit protein eL18 (198 aa).

The segment at arginine 157–valine 198 is disordered. The span at glutamate 179–valine 198 shows a compositional bias: basic residues.

The protein belongs to the eukaryotic ribosomal protein eL18 family.

Its subcellular location is the cytoplasm. The polypeptide is Large ribosomal subunit protein eL18 (RPL18-A) (Leishmania major).